Here is a 361-residue protein sequence, read N- to C-terminus: Probable dual-specificity RNA methyltransferase RlmN (361 aa).

The Proton acceptor role is filled by Glu-91. One can recognise a Radical SAM core domain in the interval 97-329; that stretch reads QHYGLSVCVT…KKKGGNCVVR (233 aa). A disulfide bridge links Cys-104 with Cys-340. Residues Cys-111, Cys-115, and Cys-118 each contribute to the [4Fe-4S] cluster site. Residues 163–164, Ser-195, 218–220, and Asn-296 each bind S-adenosyl-L-methionine; these read GE and SLH. Cys-340 serves as the catalytic S-methylcysteine intermediate.

Belongs to the radical SAM superfamily. RlmN family. It depends on [4Fe-4S] cluster as a cofactor.

It localises to the cytoplasm. It catalyses the reaction adenosine(2503) in 23S rRNA + 2 reduced [2Fe-2S]-[ferredoxin] + 2 S-adenosyl-L-methionine = 2-methyladenosine(2503) in 23S rRNA + 5'-deoxyadenosine + L-methionine + 2 oxidized [2Fe-2S]-[ferredoxin] + S-adenosyl-L-homocysteine. The enzyme catalyses adenosine(37) in tRNA + 2 reduced [2Fe-2S]-[ferredoxin] + 2 S-adenosyl-L-methionine = 2-methyladenosine(37) in tRNA + 5'-deoxyadenosine + L-methionine + 2 oxidized [2Fe-2S]-[ferredoxin] + S-adenosyl-L-homocysteine. In terms of biological role, specifically methylates position 2 of adenine 2503 in 23S rRNA and position 2 of adenine 37 in tRNAs. This chain is Probable dual-specificity RNA methyltransferase RlmN, found in Streptococcus pneumoniae serotype 2 (strain D39 / NCTC 7466).